Consider the following 263-residue polypeptide: Small ribosomal subunit protein eS4 (263 aa).

Positions 42–105 (LPLIIFLRNR…GENFRLIYDV (64 aa)) constitute an S4 RNA-binding domain.

The protein belongs to the eukaryotic ribosomal protein eS4 family. As to quaternary structure, component of the small ribosomal subunit. Part of the small subunit (SSU) processome, composed of more than 70 proteins and the RNA chaperone small nucleolar RNA (snoRNA) U3.

It localises to the cytoplasm. The protein localises to the nucleus. Its subcellular location is the nucleolus. Its function is as follows. Component of the small ribosomal subunit. The ribosome is a large ribonucleoprotein complex responsible for the synthesis of proteins in the cell. Part of the small subunit (SSU) processome, first precursor of the small eukaryotic ribosomal subunit. During the assembly of the SSU processome in the nucleolus, many ribosome biogenesis factors, an RNA chaperone and ribosomal proteins associate with the nascent pre-rRNA and work in concert to generate RNA folding, modifications, rearrangements and cleavage as well as targeted degradation of pre-ribosomal RNA by the RNA exosome. The sequence is that of Small ribosomal subunit protein eS4 (rps4x) from Danio rerio (Zebrafish).